Consider the following 166-residue polypeptide: Small ribosomal subunit protein uS5 (166 aa).

The S5 DRBM domain occupies 11 to 74; sequence LNEKLIAVNR…EKARRNMFTI (64 aa).

Belongs to the universal ribosomal protein uS5 family. Part of the 30S ribosomal subunit. Contacts proteins S4 and S8.

With S4 and S12 plays an important role in translational accuracy. Its function is as follows. Located at the back of the 30S subunit body where it stabilizes the conformation of the head with respect to the body. This is Small ribosomal subunit protein uS5 from Aliivibrio fischeri (strain ATCC 700601 / ES114) (Vibrio fischeri).